A 61-amino-acid chain; its full sequence is Small ribosomal subunit protein uS14 (61 aa).

Residues C24, C27, C40, and C43 each contribute to the Zn(2+) site.

Belongs to the universal ribosomal protein uS14 family. Zinc-binding uS14 subfamily. As to quaternary structure, part of the 30S ribosomal subunit. Contacts proteins S3 and S10. It depends on Zn(2+) as a cofactor.

In terms of biological role, binds 16S rRNA, required for the assembly of 30S particles and may also be responsible for determining the conformation of the 16S rRNA at the A site. In Clostridium botulinum (strain ATCC 19397 / Type A), this protein is Small ribosomal subunit protein uS14.